Here is a 243-residue protein sequence, read N- to C-terminus: Proteasome subunit beta (243 aa).

The tract at residues 1-40 (MRTPMNNDISGRPDSLNGDRSDVFSPELGEFPNADDRAND) is disordered. Residues 1–49 (MRTPMNNDISGRPDSLNGDRSDVFSPELGEFPNADDRANDIGDMETKTG) constitute a propeptide, removed in mature form; by autocatalysis. The Nucleophile role is filled by Thr-50.

It belongs to the peptidase T1B family. The 20S proteasome core is composed of 14 alpha and 14 beta subunits that assemble into four stacked heptameric rings, resulting in a barrel-shaped structure. The two inner rings, each composed of seven catalytic beta subunits, are sandwiched by two outer rings, each composed of seven alpha subunits. The catalytic chamber with the active sites is on the inside of the barrel. Has a gated structure, the ends of the cylinder being occluded by the N-termini of the alpha-subunits. Is capped at one or both ends by the proteasome regulatory ATPase, PAN.

Its subcellular location is the cytoplasm. It catalyses the reaction Cleavage of peptide bonds with very broad specificity.. With respect to regulation, the formation of the proteasomal ATPase PAN-20S proteasome complex, via the docking of the C-termini of PAN into the intersubunit pockets in the alpha-rings, triggers opening of the gate for substrate entry. Interconversion between the open-gate and close-gate conformations leads to a dynamic regulation of the 20S proteasome proteolysis activity. Its function is as follows. Component of the proteasome core, a large protease complex with broad specificity involved in protein degradation. This chain is Proteasome subunit beta, found in Haloquadratum walsbyi (strain DSM 16790 / HBSQ001).